We begin with the raw amino-acid sequence, 186 residues long: Ribosome-recycling factor (186 aa).

Belongs to the RRF family.

It localises to the cytoplasm. Responsible for the release of ribosomes from messenger RNA at the termination of protein biosynthesis. May increase the efficiency of translation by recycling ribosomes from one round of translation to another. In Bordetella petrii (strain ATCC BAA-461 / DSM 12804 / CCUG 43448), this protein is Ribosome-recycling factor.